Consider the following 160-residue polypeptide: Cytochrome b6-f complex subunit 4 (160 aa).

A run of 3 helical transmembrane segments spans residues 36–56 (LLYI…GLSV), 95–115 (LLGV…PFIE), and 127–147 (PVAM…GIGA).

This sequence belongs to the cytochrome b family. PetD subfamily. The 4 large subunits of the cytochrome b6-f complex are cytochrome b6, subunit IV (17 kDa polypeptide, petD), cytochrome f and the Rieske protein, while the 4 small subunits are petG, petL, petM and petN. The complex functions as a dimer.

It localises to the plastid. It is found in the chloroplast thylakoid membrane. Component of the cytochrome b6-f complex, which mediates electron transfer between photosystem II (PSII) and photosystem I (PSI), cyclic electron flow around PSI, and state transitions. This Guillardia theta (Cryptophyte) protein is Cytochrome b6-f complex subunit 4.